Here is a 1666-residue protein sequence, read N- to C-terminus: Complement C3 (1666 aa).

Residues 1 to 22 form the signal peptide; the sequence is MGPAAGPSLLLLLLASVSLALG. Phosphoserine occurs at positions 70, 296, and 302. 13 disulfide bridges follow: C557–C821, C630–C666, C698–C725, C699–C732, C712–C733, C878–C1517, C1106–C1163, C1363–C1493, C1394–C1462, C1510–C1515, C1522–C1593, C1540–C1664, and C1640–C1649. A Phosphoserine modification is found at S676. The Anaphylatoxin-like domain maps to 698–733; it reads CCEDGMRENPMQFSCQRRARYVSLGEACVKAFLDCC. The N-linked (GlcNAc...) asparagine glycan is linked to N944. S973 is modified (phosphoserine). Positions 1015–1018 form a cross-link, isoglutamyl cysteine thioester (Cys-Gln); sequence CGEQ. The residue at position 1326 (S1326) is a Phosphoserine. The NTR domain occupies 1522–1664; it reads CFIQLPEKIT…FTENMVVFGC (143 aa). A Phosphoserine modification is found at S1576. N1620 is a glycosylation site (N-linked (GlcNAc...) asparagine). The segment at 1637-1662 is interaction with CFP/properdin; it reads AEECQDEENQQQCQDLGTFTENMVVF.

In absence of complement activation, the C3 precursor is first processed by the removal of 4 Arg residues, forming two chains, beta and alpha, linked by a disulfide bond. In terms of assembly, complement C3b is composed of complement C3b and complement C3 beta chains that are associated via disulfide bonds. Non-enzymatic component of the C5 convertase, also named C4bC2bC3b, composed of the serine protease complement C2b (C2), complement C3b, as well as complement C4b (C4). Non-enzymatic component of the C5 convertase of the alternative complement pathways composed of the serine protease complement CFB and complement C3b. Interacts with CFP; interaction takes place together with CFB in the alternative complement system and allows the complex to become active. Interacts with CR1 (via Sushi 8 and Sushi 9 domains). Interacts with CFH. As to quaternary structure, interacts with CFH. Interacts with CR2. During pregnancy, C3dg exists as a complex (probably a 2:2:2 heterohexamer) with AGT and the proform of PRG2. Interacts with CR2 (via the N-terminal Sushi domains 1 and 2). Post-translationally, C3 precursor is first processed by the removal of 4 Arg residues, forming two chains, beta and alpha, linked by a disulfide bond. During activation of the complement systems, the alpha chain is cleaved into C3a and C3b by the C3 convertase: C3b stays linked to the beta chain, while C3a is released in the plasma. The alpha chain is cleaved by the serine protease complement C2b component of the C3 convertase to generate C3a and C3b following activation by the classical, lectin and GZMK complement systems. The alpha chain is cleaved by CFB component of the C3 convertase to generate C3a and C3b following activation by the alternative complement system. C3a is further processed by carboxypeptidases to release the C-terminal arginine residue generating the acylation stimulating protein (ASP). Levels of ASP are increased in adipocytes in the postprandial period and by insulin and dietary chylomicrons. In terms of processing, complement C3b is rapidly split in two positions by factor I (CFI) and a cofactor (CFH) to form iC3b (inactivated C3b) and C3f which is released. CFI and CFH catalyze proteolytic degradation of already-deposited complement C3b. Then iC3b is slowly cleaved (possibly by CFI) to form C3c (beta chain + alpha' chain fragment 1 + alpha' chain fragment 2), C3dg and C3f. Other proteases produce other fragments such as C3d or C3g. Post-translationally, upon activation, the internal thioester bond reacts with carbohydrate antigens on the target surface to form amide or ester bonds, leading to covalent association with the surface of pathogens. Complement C3b interacts with complement C4b via a thioester linkage. In terms of processing, phosphorylated by FAM20C in the extracellular medium.

The protein localises to the secreted. The protein resides in the cell surface. Its activity is regulated as follows. Complement activation is inhibited by VSIG4. In terms of biological role, precursor of non-enzymatic components of the classical, alternative, lectin and GZMK complement pathways, which consist in a cascade of proteins that leads to phagocytosis and breakdown of pathogens and signaling that strengthens the adaptive immune system. Its function is as follows. Non-enzymatic component of C5 convertase. Generated following cleavage by C3 convertase, it covalently attaches to the surface of pathogens, where it acts as an opsonin that marks the surface of antigens for removal. Complement C3b binds covalently via its reactive thioester, to cell surface carbohydrates or immune aggregates. Together with complement C4b, it then recruits the serine protease complement C2b to form the C5 convertase, which cleaves and activate C5, the next component of the complement pathways. In the alternative complement pathway, recruits the serine protease CFB to form the C5 convertase that cleaves and activates C5. Functionally, mediator of local inflammatory process released following cleavage by C3 convertase. Acts by binding to its receptor, C3AR1, activating G protein-coupled receptor signaling, promoting the phosphorylation, ARRB2-mediated internalization and endocytosis of C3AR1. C3a anaphylatoxin stimulates the activation of immune cells such as mast cells and basophilic leukocytes to release inflammation agents, such as cytokines, chemokines and histamine, which promote inflammation development. Also acts as potent chemoattractant for the migration of macrophages and neutrophils to the inflamed tissues, resulting in neutralization of the inflammatory triggers by multiple ways, such as phagocytosis and generation of reactive oxidants. Adipogenic hormone that stimulates triglyceride synthesis and glucose transport in adipocytes, regulating fat storage and playing a role in postprandial triglyceride clearance. Appears to stimulate triglyceride synthesis via activation of the PLC, MAPK and AKT signaling pathways. Acts by binding to its receptor, C5AR2, activating G protein-coupled receptor signaling, promoting the phosphorylation, ARRB2-mediated internalization and endocytosis of C5AR2. In terms of biological role, acts as a chemoattractant for neutrophils in chronic inflammation. The protein is Complement C3 of Cavia porcellus (Guinea pig).